Reading from the N-terminus, the 765-residue chain is Probable dipeptidyl peptidase 4 (765 aa).

A signal peptide spans 1-14 (MKWSILLLVGCAAA). Asn35, Asn78, Asn101, Asn110, Asn169, Asn218, Asn465, and Asn490 each carry an N-linked (GlcNAc...) asparagine glycan. Ser613 acts as the Charge relay system in catalysis. Residue Asn665 is glycosylated (N-linked (GlcNAc...) asparagine). Catalysis depends on charge relay system residues Asp690 and His725.

This sequence belongs to the peptidase S9B family.

It is found in the secreted. It catalyses the reaction Release of an N-terminal dipeptide, Xaa-Yaa-|-Zaa-, from a polypeptide, preferentially when Yaa is Pro, provided Zaa is neither Pro nor hydroxyproline.. Functionally, extracellular dipeptidyl-peptidase which removes N-terminal dipeptides sequentially from polypeptides having unsubstituted N-termini provided that the penultimate residue is proline. Contributes to pathogenicity. In Aspergillus fumigatus (strain CBS 144.89 / FGSC A1163 / CEA10) (Neosartorya fumigata), this protein is Probable dipeptidyl peptidase 4 (dpp4).